The chain runs to 347 residues: NADH-ubiquinone oxidoreductase chain 2 (347 aa).

10 helical membrane-spanning segments follow: residues 13-33, 59-79, 96-116, 122-142, 149-169, 178-198, 200-220, 240-260, 276-296, and 325-345; these read VILGTLIVMMSSHWLLIWIGF, YFFTQATASMLLMLAVLLNLM, MIMTMALTMKLGLAPFHFWVP, IPLSSGLILLTWQKLAPLTVL, INLTMLLTMSIASIAIGGWGG, IMAYSSIAHMGWMTTILIYNP, MTLLNLVIYILMTTTMFMLFM, IVTITLATLLSLGGLPPLTGF, IILPTIMAITALLNLFFYMRL, and LLTPMIVLSTLTLPPTPMIII.

Belongs to the complex I subunit 2 family. In terms of assembly, core subunit of respiratory chain NADH dehydrogenase (Complex I) which is composed of 45 different subunits. Interacts with TMEM242.

Its subcellular location is the mitochondrion inner membrane. The catalysed reaction is a ubiquinone + NADH + 5 H(+)(in) = a ubiquinol + NAD(+) + 4 H(+)(out). Core subunit of the mitochondrial membrane respiratory chain NADH dehydrogenase (Complex I) which catalyzes electron transfer from NADH through the respiratory chain, using ubiquinone as an electron acceptor. Essential for the catalytic activity and assembly of complex I. This Molossus ater (Black mastiff bat) protein is NADH-ubiquinone oxidoreductase chain 2.